The sequence spans 451 residues: Bifunctional protein GlmU (451 aa).

The pyrophosphorylase stretch occupies residues 1-231; sequence MDSPLAIIVL…ADEVAGINSR (231 aa). UDP-N-acetyl-alpha-D-glucosamine contacts are provided by residues 10 to 13, lysine 24, glutamine 74, 79 to 80, 102 to 104, glycine 142, glutamate 156, asparagine 171, and asparagine 229; these read LAAG, GT, and YGD. Residue aspartate 104 participates in Mg(2+) binding. Asparagine 229 provides a ligand contact to Mg(2+). The tract at residues 232-252 is linker; it reads GELAEAEGRWQQRRRAAAMAD. The tract at residues 253–451 is N-acetyltransferase; sequence GASLIAPETV…MKKKKAEKKS (199 aa). The UDP-N-acetyl-alpha-D-glucosamine site is built by arginine 318 and lysine 336. The Proton acceptor role is filled by histidine 348. UDP-N-acetyl-alpha-D-glucosamine is bound by residues tyrosine 351 and asparagine 362. Acetyl-CoA is bound by residues alanine 365, 371 to 372, serine 390, alanine 408, and arginine 425; that span reads NY.

It in the N-terminal section; belongs to the N-acetylglucosamine-1-phosphate uridyltransferase family. The protein in the C-terminal section; belongs to the transferase hexapeptide repeat family. Homotrimer. Requires Mg(2+) as cofactor.

The protein localises to the cytoplasm. The catalysed reaction is alpha-D-glucosamine 1-phosphate + acetyl-CoA = N-acetyl-alpha-D-glucosamine 1-phosphate + CoA + H(+). The enzyme catalyses N-acetyl-alpha-D-glucosamine 1-phosphate + UTP + H(+) = UDP-N-acetyl-alpha-D-glucosamine + diphosphate. It participates in nucleotide-sugar biosynthesis; UDP-N-acetyl-alpha-D-glucosamine biosynthesis; N-acetyl-alpha-D-glucosamine 1-phosphate from alpha-D-glucosamine 6-phosphate (route II): step 2/2. It functions in the pathway nucleotide-sugar biosynthesis; UDP-N-acetyl-alpha-D-glucosamine biosynthesis; UDP-N-acetyl-alpha-D-glucosamine from N-acetyl-alpha-D-glucosamine 1-phosphate: step 1/1. The protein operates within bacterial outer membrane biogenesis; LPS lipid A biosynthesis. Its function is as follows. Catalyzes the last two sequential reactions in the de novo biosynthetic pathway for UDP-N-acetylglucosamine (UDP-GlcNAc). The C-terminal domain catalyzes the transfer of acetyl group from acetyl coenzyme A to glucosamine-1-phosphate (GlcN-1-P) to produce N-acetylglucosamine-1-phosphate (GlcNAc-1-P), which is converted into UDP-GlcNAc by the transfer of uridine 5-monophosphate (from uridine 5-triphosphate), a reaction catalyzed by the N-terminal domain. The polypeptide is Bifunctional protein GlmU (Novosphingobium aromaticivorans (strain ATCC 700278 / DSM 12444 / CCUG 56034 / CIP 105152 / NBRC 16084 / F199)).